The primary structure comprises 88 residues: Stannin (88 aa).

At 1-10 (MSIMDHSPTT) the chain is on the mitochondrial intermembrane side. A helical membrane pass occupies residues 11 to 31 (GVVTVIVILIAIAALGALILG). The Cytoplasmic segment spans residues 32-88 (CWCYLRLQRISQSEDEESIVGDGETKEPFLLVQYSAKGPCVERKAKLMTPNGPEVHG). S49 is modified (phosphoserine).

The protein belongs to the stannin family. As to quaternary structure, monomer.

The protein localises to the mitochondrion outer membrane. In terms of biological role, plays a role in the toxic effects of organotins. Plays a role in endosomal maturation. The polypeptide is Stannin (SNN) (Homo sapiens (Human)).